We begin with the raw amino-acid sequence, 516 residues long: MGHEEELSPEQVDLKVSPLMGSLKRTWNDFCATSSIHGLRYTRDEDTNRIVHFVWLLISLVMFICAVVMARTFYIDFRSNPTRMNVESDNTPVNTLYFPPVTICPDVLFNMQKSEAFLQTLQLPQGTNQSVILRKLHIFYGFMLDDEKYSEQDTSLMESLLSLNNLTLQQLVEHLRWNCDEILYRCRFNGQIRDCLELFQLSKTFFGHCCSFNLRQTGLNFTAERAVGGLKYGLSVILRYKDDSYDPVQSYSFGVKLLIQESDAFPSAHSSSKFIAFNSEVFAAIRPQETFCSPAVKALSIEDRNCVFRNEFKMRYFKNYVYPNCELNCRVTNMVKFCNCHTYFFDFNRTTDRICTFKDIPCLVDNFANIISRKRSTQCYCPLTCEHLDYDVQISDFPLKLNMPVGDQFYSGINKNDGILHVFINSFGYRRLRHDLLSNMVTLVSNLGSAFSLFVGMSMLSVVEIMYYFSVILRKNYVLECEARKKMLHKGPKFAWPKANDSHSKHQKSVFIIHKM.

The Cytoplasmic portion of the chain corresponds to 1 to 49; that stretch reads MGHEEELSPEQVDLKVSPLMGSLKRTWNDFCATSSIHGLRYTRDEDTNR. A helical membrane pass occupies residues 50-70; the sequence is IVHFVWLLISLVMFICAVVMA. Residues 71-452 lie on the Extracellular side of the membrane; it reads RTFYIDFRSN…LVSNLGSAFS (382 aa). N-linked (GlcNAc...) asparagine glycosylation is found at Asn128, Asn165, Asn220, and Asn348. Residues 453 to 473 form a helical membrane-spanning segment; that stretch reads LFVGMSMLSVVEIMYYFSVIL. Residues 474 to 516 are Cytoplasmic-facing; sequence RKNYVLECEARKKMLHKGPKFAWPKANDSHSKHQKSVFIIHKM.

Belongs to the amiloride-sensitive sodium channel (TC 1.A.6) family.

It localises to the membrane. Part of a complex that plays a role in tracheal liquid clearance. Probable role in sodium transport. This is Sodium channel protein Nach (Nach) from Drosophila ananassae (Fruit fly).